The primary structure comprises 419 residues: Interferon regulatory factor 3 (419 aa).

At Thr3 the chain carries Phosphothreonine. The IRF tryptophan pentad repeat DNA-binding region spans 5–111 (KPRILPWLIS…DPHKIYEFVT (107 aa)). The residue at position 14 (Ser14) is a Phosphoserine. A Phosphothreonine modification is found at Thr75. 2 positions are modified to phosphoserine: Ser97 and Ser123. The segment at 118–137 (PEPDTSLDLSGRYSTSDTHE) is disordered. The segment at 140–419 (LDKLLSGMDL…LRDLVEDMDF (280 aa)) is mediates interaction with ZDHHC11. A Glycyl lysine isopeptide (Lys-Gly) (interchain with G-Cter in ISG15) cross-link involves residue Lys191. An interaction with HERC5 region spans residues 198–358 (DEWEFQVTVF…SWPQDEPWVK (161 aa)). Residues Thr235 and Thr251 each carry the phosphothreonine modification. The cysteines at positions 265 and 287 are disulfide-linked. Residues Lys358 and Lys364 each participate in a glycyl lysine isopeptide (Lys-Gly) (interchain with G-Cter in ISG15) cross-link. Residue Lys364 is modified to N6-acetyllysine. Ser383 is modified (phosphoserine). Position 384 is a diphosphoserine (Ser384). Position 384 is a phosphoserine; by TBK1 (Ser384). Residue Ser394 is modified to Phosphoserine; by IKKE. Residue Ser396 is modified to Phosphoserine. The residue at position 402 (Thr402) is a Phosphothreonine.

This sequence belongs to the IRF family. As to quaternary structure, monomer. Homodimer; phosphorylation-induced. Interacts (when phosphorylated) with CREBBP. Interacts with MAVS (via phosphorylated pLxIS motif). Interacts with TICAM1 (via phosphorylated pLxIS motif). Interacts with STING1 (via phosphorylated pLxIS motif). Interacts with IKBKE and TBK1. Interacts with TICAM2. Interacts with RBCK1. Interacts with HERC5. Interacts with DDX3X; the interaction allows the phosphorylation and activation of IRF3 by IKBKE. Interacts with TRIM21 and ULK1, in the presence of TRIM21; this interaction leads to IRF3 degradation by autophagy. Interacts with RIOK3; RIOK3 probably mediates the interaction of TBK1 with IRF3. Interacts with ILRUN; the interaction inhibits IRF3 binding to its DNA consensus sequence. Interacts with LYAR; this interaction impairs IRF3 DNA-binding activity. Interacts with TRAF3. Interacts with ZDHHC11; ZDHHC11 recruits IRF3 to STING1 upon DNA virus infection and thereby promotes IRF3 activation. Interacts with HSP90AA1; the interaction mediates IRF3 association with TOMM70. Interacts with BCL2; the interaction decreases upon Sendai virus infection. Interacts with BAX; the interaction is direct, increases upon virus infection and mediates the formation of the apoptosis complex TOMM70:HSP90AA1:IRF3:BAX. Interacts with DDX56. Interacts with NBR1. In terms of assembly, (Microbial infection) Interacts with Porcine epidemic diarrhea virus E protein; this interaction prevents IRF3 translocation to the nucleus and thereby prevents type I interferon production. (Microbial infection) Interacts with African swine fever virus (ASFV) P14.5/E120R; this interaction interferes with the recruitment of IRF3 to TBK1, which in turn suppresses IRF3 phosphorylation, decreasing interferon production via the cGAS/STING pathway. As to quaternary structure, (Microbial infection) Interacts with African swine fever virus (ASFV) MGF360-14L; this interaction mediates degradation of IRF3 through TRIM21 and ubiquitin-meditated proteolysis. In terms of assembly, (Microbial infection) Interacts with African swine fever virus (ASFV) E301R; this interaction inhibits nuclear translocation of IRF3 to the nucleus. (Microbial infection) Interacts with African swine fever virus (ASFV) minor capsid protein M1249L; this interaction mediates IRF3 degradation. Post-translationally, constitutively phosphorylated on many Ser/Thr residues. Activated following phosphorylation by TBK1 and IKBKE. Innate adapter proteins, such as MAVS, STING1 or TICAM1, are first activated by viral RNA, cytosolic DNA, and bacterial lipopolysaccharide (LPS), respectively, leading to activation of the kinases TBK1 and IKBKE. These kinases then phosphorylate the adapter proteins on the pLxIS motif, leading to recruitment of IRF3, thereby licensing IRF3 for phosphorylation by TBK1. Phosphorylation at Ser-384 is followed by pyrophosphorylation at the same residue, promoting phosphorylation at Ser-394. Phosphorylated IRF3 dissociates from the adapter proteins, dimerizes, and then enters the nucleus to induce IFNs. In terms of processing, pyrophosphorylated by UAP1 following phosphorylation at Ser-384 by TBK1. Pyrophosphorylation promotes subsequent phosphorylation at Ser-394, leading to homodimerization of IRF3. Acetylation at Lys-364 by KAT8 inhibits recruimtent to promoters and transcription factor activity. Acetylation by KAT8 is promoted by phosphorylation at Ser-394. Post-translationally, ubiquitinated; ubiquitination involves RBCK1 leading to proteasomal degradation. Polyubiquitinated; ubiquitination involves TRIM21 leading to proteasomal degradation. Ubiquitinated by UBE3C, leading to its degradation. Deubiquitinated by USP5 on both 'Lys-48'-linked unanchored and 'Lys-63'-linked anchored polyubiquitin, leading to inhibition of antiviral innate immunity. In terms of processing, ISGylated by HERC5 resulting in sustained IRF3 activation and in the inhibition of IRF3 ubiquitination by disrupting PIN1 binding. The phosphorylation state of IRF3 does not alter ISGylation. (Microbial infection) Phosphorylated by pseudorabies virus protein kinase UL13; leading to decreased IRF3 binding to the IRF3-responsive promoters and downstream ISG expression. Post-translationally, proteolytically cleaved by apoptotic caspases during apoptosis, leading to its inactivation. Cleavage by CASP3 during virus-induced apoptosis inactivates it, preventing cytokine overproduction.

It localises to the cytoplasm. The protein resides in the nucleus. The protein localises to the mitochondrion. With respect to regulation, in the absence of viral infection, maintained as a monomer in an autoinhibited state. Phosphorylation by TBK1 and IKBKE disrupts this autoinhibition leading to the liberation of the DNA-binding and dimerization activities and its nuclear localization where it can activate type I IFN and ISG genes. Phosphorylation and activation follow the following steps: innate adapter proteins, such as MAVS, STING1 or TICAM1, are first activated by viral RNA, cytosolic DNA and bacterial lipopolysaccharide (LPS), respectively, leading to activation of the kinases TBK1 and IKBKE. These kinases then phosphorylate the adapter proteins on their pLxIS motif, leading to recruitment of IRF3, thereby licensing IRF3 for phosphorylation by TBK1. Phosphorylated IRF3 dissociates from the adapter proteins, dimerizes, and then enters the nucleus to induce IFNs. Functionally, key transcriptional regulator of type I interferon (IFN)-dependent immune responses which plays a critical role in the innate immune response against DNA and RNA viruses. Regulates the transcription of type I IFN genes (IFN-alpha and IFN-beta) and IFN-stimulated genes (ISG) by binding to an interferon-stimulated response element (ISRE) in their promoters. Acts as a more potent activator of the IFN-beta (IFNB) gene than the IFN-alpha (IFNA) gene and plays a critical role in both the early and late phases of the IFNA/B gene induction. Found in an inactive form in the cytoplasm of uninfected cells and following viral infection, double-stranded RNA (dsRNA), or toll-like receptor (TLR) signaling, is phosphorylated by IKBKE and TBK1 kinases. This induces a conformational change, leading to its dimerization and nuclear localization and association with CREB binding protein (CREBBP) to form dsRNA-activated factor 1 (DRAF1), a complex which activates the transcription of the type I IFN and ISG genes. Can activate distinct gene expression programs in macrophages and can induce significant apoptosis in primary macrophages. This is Interferon regulatory factor 3 (IRF3) from Sus scrofa (Pig).